We begin with the raw amino-acid sequence, 427 residues long: GTPase Obg (427 aa).

Residues 1 to 158 (MFIDKAKIHL…LTVTLELKLI (158 aa)) form the Obg domain. An OBG-type G domain is found at 159 to 330 (ADVGLVGFPN…LLDYVSIKLK (172 aa)). GTP contacts are provided by residues 165–172 (GFPNVGKS), 190–194 (FTTLT), 212–215 (DIPG), 282–285 (NKTD), and 311–313 (SAA). Mg(2+) is bound by residues S172 and T192. Residues 347–427 (LYELKEKDTN…IYDVEFEYFH (81 aa)) form the OCT domain.

This sequence belongs to the TRAFAC class OBG-HflX-like GTPase superfamily. OBG GTPase family. Monomer. Mg(2+) serves as cofactor.

Its subcellular location is the cytoplasm. Functionally, an essential GTPase which binds GTP, GDP and possibly (p)ppGpp with moderate affinity, with high nucleotide exchange rates and a fairly low GTP hydrolysis rate. Plays a role in control of the cell cycle, stress response, ribosome biogenesis and in those bacteria that undergo differentiation, in morphogenesis control. The chain is GTPase Obg from Alkaliphilus metalliredigens (strain QYMF).